A 342-amino-acid polypeptide reads, in one-letter code: S-adenosylmethionine:tRNA ribosyltransferase-isomerase (342 aa).

Belongs to the QueA family. Monomer.

It localises to the cytoplasm. The enzyme catalyses 7-aminomethyl-7-carbaguanosine(34) in tRNA + S-adenosyl-L-methionine = epoxyqueuosine(34) in tRNA + adenine + L-methionine + 2 H(+). Its pathway is tRNA modification; tRNA-queuosine biosynthesis. Its function is as follows. Transfers and isomerizes the ribose moiety from AdoMet to the 7-aminomethyl group of 7-deazaguanine (preQ1-tRNA) to give epoxyqueuosine (oQ-tRNA). This chain is S-adenosylmethionine:tRNA ribosyltransferase-isomerase, found in Streptococcus pyogenes serotype M6 (strain ATCC BAA-946 / MGAS10394).